We begin with the raw amino-acid sequence, 289 residues long: Membrane protein insertase YidC (289 aa).

The N-terminal stretch at Met1–Gly19 is a signal peptide. Cys20 is lipidated: N-palmitoyl cysteine. Cys20 carries S-diacylglycerol cysteine lipidation. The next 5 helical transmembrane spans lie at Tyr55–Leu75, Met133–Leu153, Ile177–Ser197, Met210–Leu230, and Tyr231–Ser251. Residues Glu268 to Lys289 form a disordered region.

It belongs to the OXA1/ALB3/YidC family. Type 2 subfamily.

It is found in the cell membrane. Its function is as follows. Required for the insertion and/or proper folding and/or complex formation of integral membrane proteins into the membrane. Involved in integration of membrane proteins that insert both dependently and independently of the Sec translocase complex, as well as at least some lipoproteins. This is Membrane protein insertase YidC from Staphylococcus carnosus (strain TM300).